We begin with the raw amino-acid sequence, 290 residues long: ATP synthase gamma chain (290 aa).

The protein belongs to the ATPase gamma chain family. F-type ATPases have 2 components, CF(1) - the catalytic core - and CF(0) - the membrane proton channel. CF(1) has five subunits: alpha(3), beta(3), gamma(1), delta(1), epsilon(1). CF(0) has three main subunits: a, b and c.

The protein resides in the cell membrane. Functionally, produces ATP from ADP in the presence of a proton gradient across the membrane. The gamma chain is believed to be important in regulating ATPase activity and the flow of protons through the CF(0) complex. The polypeptide is ATP synthase gamma chain (Heliobacterium modesticaldum (strain ATCC 51547 / Ice1)).